The primary structure comprises 155 residues: Ribosomal RNA large subunit methyltransferase H (155 aa).

Residues Leu-72, Gly-103, and Leu-122–Leu-127 contribute to the S-adenosyl-L-methionine site.

This sequence belongs to the RNA methyltransferase RlmH family. As to quaternary structure, homodimer.

It localises to the cytoplasm. It carries out the reaction pseudouridine(1915) in 23S rRNA + S-adenosyl-L-methionine = N(3)-methylpseudouridine(1915) in 23S rRNA + S-adenosyl-L-homocysteine + H(+). Functionally, specifically methylates the pseudouridine at position 1915 (m3Psi1915) in 23S rRNA. This chain is Ribosomal RNA large subunit methyltransferase H, found in Actinobacillus pleuropneumoniae serotype 5b (strain L20).